A 283-amino-acid chain; its full sequence is Undecaprenyl-diphosphatase (283 aa).

Helical transmembrane passes span 46–66 (PGVS…IAYF), 95–115 (VAMV…KFFW), 127–147 (VPSI…AECM), 154–174 (LGGV…LAVI), 200–220 (FSFL…LKSA), 227–247 (AGPL…WLAI), and 259–279 (TWIF…WWAF).

It belongs to the UppP family.

Its subcellular location is the cell inner membrane. The catalysed reaction is di-trans,octa-cis-undecaprenyl diphosphate + H2O = di-trans,octa-cis-undecaprenyl phosphate + phosphate + H(+). Its function is as follows. Catalyzes the dephosphorylation of undecaprenyl diphosphate (UPP). Confers resistance to bacitracin. The protein is Undecaprenyl-diphosphatase of Synechococcus sp. (strain CC9902).